The following is a 1136-amino-acid chain: 3-O-alpha-D-galactosyl-alpha-L-arabinofuranosidase (1136 aa).

Residues 1–36 (MGISRNRLVPGLVGLAASAAIVLPLGIGMPVSSATA) form the signal peptide. The active-site Proton donor is the Glu-194. Glu-321 (nucleophile) is an active-site residue. 2 consecutive CBM6 domains span residues 521-656 (QAIE…LLLY) and 669-779 (VTYP…VTTA). The region spanning 987–1045 (KASLKVGETLSLNASVTPDSVADKTVQWTSSDEQVATVDEHGVVKGVKAGTVTITATSV) is the BIG2 domain. Positions 1049 to 1104 (SRSGSVEVTVAEDSEQKPSGGDGDNNGEQTGKPDGNTGGQTSDSDAGADSGNNQKH) are disordered. A compositionally biased stretch (polar residues) spans 1087-1103 (GQTSDSDAGADSGNNQK). Residues 1109 to 1129 (GAAVAAVAGVAVLLAGAGLLL) form a helical membrane-spanning segment.

Belongs to the glycosyl hydrolase 39 family.

It localises to the cell membrane. Its subcellular location is the secreted. The protein resides in the cell wall. It carries out the reaction Hydrolysis of alpha-D-Galp-(1-&gt;3)-L-Araf disaccharides from non-reducing terminals in branches of type II arabinogalactan attached to proteins.. In terms of biological role, hydrolase involved in the degradation of the gum arabic arabinogalactan protein (AGP). Catalyzes the release of 3-O-alpha-D-galactopyranosyl-L-arabinose (alpha-D-Galp-(1-&gt;3)-L-Ara) from gum arabic AGP. Can also release 3-O-beta-L-arabinopyranosyl-L-arabinose (beta-L-Arap-(1-&gt;3)-L-Ara) from gum arabic AGP and larch AGP, but the alpha-D-Galp-(1-&gt;3)-L-Ara release activity is 594-fold higher than the beta-L-Arap-(1-&gt;3)-L-Ara release activity. Exhibits no reactivity toward p-nitrophenyl (pNP)-alpha-Araf or any other tested pNP substrate. Plays a crucial role in gum arabic AGP assimilation in B.longum. In Bifidobacterium longum subsp. longum, this protein is 3-O-alpha-D-galactosyl-alpha-L-arabinofuranosidase.